Here is a 212-residue protein sequence, read N- to C-terminus: Peptide methionine sulfoxide reductase MsrA (212 aa).

Cysteine 52 is an active-site residue.

This sequence belongs to the MsrA Met sulfoxide reductase family.

The enzyme catalyses L-methionyl-[protein] + [thioredoxin]-disulfide + H2O = L-methionyl-(S)-S-oxide-[protein] + [thioredoxin]-dithiol. It carries out the reaction [thioredoxin]-disulfide + L-methionine + H2O = L-methionine (S)-S-oxide + [thioredoxin]-dithiol. Its function is as follows. Has an important function as a repair enzyme for proteins that have been inactivated by oxidation. Catalyzes the reversible oxidation-reduction of methionine sulfoxide in proteins to methionine. This Shigella dysenteriae serotype 1 (strain Sd197) protein is Peptide methionine sulfoxide reductase MsrA.